Here is a 275-residue protein sequence, read N- to C-terminus: Large ribosomal subunit protein uL2 (275 aa).

The tract at residues Gly-223–Gly-275 is disordered. Residues Asp-230–Gly-240 are compositionally biased toward basic and acidic residues.

It belongs to the universal ribosomal protein uL2 family. In terms of assembly, part of the 50S ribosomal subunit. Forms a bridge to the 30S subunit in the 70S ribosome.

Functionally, one of the primary rRNA binding proteins. Required for association of the 30S and 50S subunits to form the 70S ribosome, for tRNA binding and peptide bond formation. It has been suggested to have peptidyltransferase activity; this is somewhat controversial. Makes several contacts with the 16S rRNA in the 70S ribosome. In Fervidobacterium nodosum (strain ATCC 35602 / DSM 5306 / Rt17-B1), this protein is Large ribosomal subunit protein uL2.